A 238-amino-acid chain; its full sequence is Phosphoribosylaminoimidazole-succinocarboxamide synthase (238 aa).

Belongs to the SAICAR synthetase family.

It carries out the reaction 5-amino-1-(5-phospho-D-ribosyl)imidazole-4-carboxylate + L-aspartate + ATP = (2S)-2-[5-amino-1-(5-phospho-beta-D-ribosyl)imidazole-4-carboxamido]succinate + ADP + phosphate + 2 H(+). It participates in purine metabolism; IMP biosynthesis via de novo pathway; 5-amino-1-(5-phospho-D-ribosyl)imidazole-4-carboxamide from 5-amino-1-(5-phospho-D-ribosyl)imidazole-4-carboxylate: step 1/2. This is Phosphoribosylaminoimidazole-succinocarboxamide synthase (purC) from Pyrococcus horikoshii (strain ATCC 700860 / DSM 12428 / JCM 9974 / NBRC 100139 / OT-3).